A 92-amino-acid chain; its full sequence is Small ribosomal subunit protein uS19 (92 aa).

This sequence belongs to the universal ribosomal protein uS19 family.

Functionally, protein S19 forms a complex with S13 that binds strongly to the 16S ribosomal RNA. The protein is Small ribosomal subunit protein uS19 of Corynebacterium urealyticum (strain ATCC 43042 / DSM 7109).